The sequence spans 526 residues: tRNA modification GTPase MSS1, mitochondrial (526 aa).

Residues 1–19 (MNSASFLQSRLISRSFLVR) constitute a mitochondrion transit peptide. The TrmE-type G domain maps to 274–444 (GIKLVLLGAP…LISTLTSNFE (171 aa)). Residues 281–288 (GAPNVGKS), 328–332 (DTAGI), and 394–397 (NKSD) contribute to the GTP site.

It belongs to the TRAFAC class TrmE-Era-EngA-EngB-Septin-like GTPase superfamily. TrmE GTPase family. In terms of assembly, forms a heterodimer with MTO1.

Its subcellular location is the mitochondrion. Its function is as follows. GTPase involved in the 5-carboxymethylaminomethyl modification (mnm(5)s(2)U34) of the wobble uridine base in mitochondrial tRNAs. Involved in the expression of cytochrome c oxidase subunit 1 (COX1). Works in association with the small subunit of mitoribosomes. This is tRNA modification GTPase MSS1, mitochondrial (MSS1) from Saccharomyces cerevisiae (strain ATCC 204508 / S288c) (Baker's yeast).